A 443-amino-acid polypeptide reads, in one-letter code: 3-isopropylmalate dehydratase large subunit (443 aa).

Residues Cys347, Cys407, and Cys410 each contribute to the [4Fe-4S] cluster site.

This sequence belongs to the aconitase/IPM isomerase family. LeuC type 1 subfamily. As to quaternary structure, heterodimer of LeuC and LeuD. The cofactor is [4Fe-4S] cluster.

The enzyme catalyses (2R,3S)-3-isopropylmalate = (2S)-2-isopropylmalate. The protein operates within amino-acid biosynthesis; L-leucine biosynthesis; L-leucine from 3-methyl-2-oxobutanoate: step 2/4. Its function is as follows. Catalyzes the isomerization between 2-isopropylmalate and 3-isopropylmalate, via the formation of 2-isopropylmaleate. The protein is 3-isopropylmalate dehydratase large subunit of Buchnera aphidicola subsp. Uroleucon sonchi.